Here is a 181-residue protein sequence, read N- to C-terminus: Probable pyruvoyl-dependent arginine decarboxylase (181 aa).

Position 43 is a pyruvic acid (Ser) (serine 43).

It belongs to the PdaD family. Pyruvate is required as a cofactor.

The enzyme catalyses L-arginine + H(+) = agmatine + CO2. In Prosthecochloris aestuarii (strain DSM 271 / SK 413), this protein is Probable pyruvoyl-dependent arginine decarboxylase.